The sequence spans 468 residues: uncharacterized protein (468 aa).

Positions 1-27 are cleaved as a signal peptide; that stretch reads MRKWYFILLAGVLTSVILAFVYDKTKA. PbH1 repeat units lie at residues 125-154, 156-185, 189-214, 216-238, 249-283, 284-305, 312-334, and 397-420; these read KHDI…YVSG, SSHI…AVYG, MKDI…VLNG, IDGF…DLIG, VRNG…YVDG, GHDI…EATS, ANAI…SIGG, and NEGN…WMWK.

The protein localises to the secreted. This is an uncharacterized protein from Bacillus subtilis (strain 168).